We begin with the raw amino-acid sequence, 63 residues long: Protein Wfdc21 (63 aa).

The N-terminal stretch at 1 to 24 (MKLGAFLLLVSLITLSLEVQELQA) is a signal peptide. A WAP; atypical domain is found at 25 to 63 (AVRPLQLLGTCAELCRGDWDCGPEEQCVSIGCSHICTTN). 3 cysteine pairs are disulfide-bonded: C35–C56, C39–C51, and C45–C60.

As to expression, predominantly expressed in white adipose tissue and liver.

It is found in the secreted. May promote activation of the metalloproteinase MMP2. The sequence is that of Protein Wfdc21 from Mus musculus (Mouse).